The following is a 399-amino-acid chain: uncharacterized protein (399 aa).

It belongs to the NADH:flavin oxidoreductase/NADH oxidase family. Directly interacts with lipoylated GcvH-L (SpyM50867).

This is an uncharacterized protein from Streptococcus pyogenes serotype M5 (strain Manfredo).